We begin with the raw amino-acid sequence, 468 residues long: Bifunctional protein GlmU (468 aa).

The pyrophosphorylase stretch occupies residues 1–233 (MAQAGSASPL…LEEANLVNDR (233 aa)). UDP-N-acetyl-alpha-D-glucosamine contacts are provided by residues 15–18 (LAAG), Lys29, Gln79, and 84–85 (GT). Position 109 (Asp109) interacts with Mg(2+). Gly146, Glu159, Asn174, and Asn231 together coordinate UDP-N-acetyl-alpha-D-glucosamine. Asn231 serves as a coordination point for Mg(2+). Residues 234–254 (SQLARAEEILRRRILDAHMKE) are linker. The interval 255 to 468 (GVTVRDPVST…GDRRRARTEG (214 aa)) is N-acetyltransferase. Arg336 and Lys354 together coordinate UDP-N-acetyl-alpha-D-glucosamine. The active-site Proton acceptor is the His366. 2 residues coordinate UDP-N-acetyl-alpha-D-glucosamine: Tyr369 and Asn380. Acetyl-CoA is bound by residues Ala383, 389–390 (NY), and Ala426.

This sequence in the N-terminal section; belongs to the N-acetylglucosamine-1-phosphate uridyltransferase family. The protein in the C-terminal section; belongs to the transferase hexapeptide repeat family. As to quaternary structure, homotrimer. Requires Mg(2+) as cofactor.

The protein resides in the cytoplasm. It catalyses the reaction alpha-D-glucosamine 1-phosphate + acetyl-CoA = N-acetyl-alpha-D-glucosamine 1-phosphate + CoA + H(+). The catalysed reaction is N-acetyl-alpha-D-glucosamine 1-phosphate + UTP + H(+) = UDP-N-acetyl-alpha-D-glucosamine + diphosphate. Its pathway is nucleotide-sugar biosynthesis; UDP-N-acetyl-alpha-D-glucosamine biosynthesis; N-acetyl-alpha-D-glucosamine 1-phosphate from alpha-D-glucosamine 6-phosphate (route II): step 2/2. It functions in the pathway nucleotide-sugar biosynthesis; UDP-N-acetyl-alpha-D-glucosamine biosynthesis; UDP-N-acetyl-alpha-D-glucosamine from N-acetyl-alpha-D-glucosamine 1-phosphate: step 1/1. The protein operates within bacterial outer membrane biogenesis; LPS lipid A biosynthesis. In terms of biological role, catalyzes the last two sequential reactions in the de novo biosynthetic pathway for UDP-N-acetylglucosamine (UDP-GlcNAc). The C-terminal domain catalyzes the transfer of acetyl group from acetyl coenzyme A to glucosamine-1-phosphate (GlcN-1-P) to produce N-acetylglucosamine-1-phosphate (GlcNAc-1-P), which is converted into UDP-GlcNAc by the transfer of uridine 5-monophosphate (from uridine 5-triphosphate), a reaction catalyzed by the N-terminal domain. This Rubrobacter xylanophilus (strain DSM 9941 / JCM 11954 / NBRC 16129 / PRD-1) protein is Bifunctional protein GlmU.